The chain runs to 776 residues: Protein SEY1 (776 aa).

Residues 1–681 are Cytoplasmic-facing; it reads MADRSAIQLI…KRSIITTRTH (681 aa). Residues 34-263 form the GB1/RHD3-type G domain; the sequence is GLDYHVISVF…TENYYFKPQY (230 aa). A GTP-binding site is contributed by 44–51; the sequence is GSQSSGKS. A helical membrane pass occupies residues 682–702; it reads IPPWIYVLLAVLGWNEFVAVI. Residues 703-705 are Lumenal-facing; it reads RNP. A helical transmembrane segment spans residues 706 to 726; sequence LFVTLTLILGATFFVIHKFGL. The Cytoplasmic portion of the chain corresponds to 727–776; it reads WGPVVNVVQSAVGETRTAIKDKLRQFVVEDHEVKESFEMKDFSKNEQKEK.

This sequence belongs to the TRAFAC class dynamin-like GTPase superfamily. GB1/RHD3 GTPase family. RHD3 subfamily. In terms of assembly, interacts with RTN1 and YOP1; GTP binding is not required for these interactions.

The protein localises to the endoplasmic reticulum membrane. Cooperates with the reticulon proteins RTN1 and RTN2 and the tubule-shaping DP1 family protein YOP1 to generate and maintain the structure of the tubular endoplasmic reticulum network. Has GTPase activity, which is required for its function in ER organization. In Saccharomyces cerevisiae (strain YJM789) (Baker's yeast), this protein is Protein SEY1.